The chain runs to 526 residues: Probable di/tripeptide-binding protein 5 (526 aa).

An N-terminal signal peptide occupies residues 1–21 (MRLAAFSLFLAPLLLAQPAAA).

It belongs to the bacterial solute-binding protein 5 family. As to quaternary structure, the complex is composed of two ATP-binding proteins (DppD and DppF), two transmembrane proteins (DppB and DppC) and a solute-binding protein (DppA5). Five orthologous SBPs (DppA1-A5) are present in P.aeruginosa, which increases the substrate specificity of the DppBCDF transporter.

Part of the ABC transporter DppABCDF involved in the uptake of various di/tripeptides. The protein is Probable di/tripeptide-binding protein 5 of Pseudomonas aeruginosa (strain UCBPP-PA14).